We begin with the raw amino-acid sequence, 282 residues long: S-formylglutathione hydrolase (282 aa).

At Ala2 the chain carries N-acetylalanine. Lys4 is subject to N6-succinyllysine. Residues Ser149, Asp226, and His260 each act as charge relay system in the active site.

The protein belongs to the esterase D family. Homodimer.

Its subcellular location is the cytoplasm. It is found in the cytoplasmic vesicle. It carries out the reaction S-formylglutathione + H2O = formate + glutathione + H(+). Its function is as follows. Serine hydrolase involved in the detoxification of formaldehyde. This is S-formylglutathione hydrolase (ESD) from Bos taurus (Bovine).